A 159-amino-acid polypeptide reads, in one-letter code: Ribosomal RNA large subunit methyltransferase H (159 aa).

S-adenosyl-L-methionine-binding positions include L76, G108, and 127–132; that span reads FGKLTM.

The protein belongs to the RNA methyltransferase RlmH family. In terms of assembly, homodimer.

It is found in the cytoplasm. It carries out the reaction pseudouridine(1915) in 23S rRNA + S-adenosyl-L-methionine = N(3)-methylpseudouridine(1915) in 23S rRNA + S-adenosyl-L-homocysteine + H(+). Its function is as follows. Specifically methylates the pseudouridine at position 1915 (m3Psi1915) in 23S rRNA. The protein is Ribosomal RNA large subunit methyltransferase H of Lactobacillus delbrueckii subsp. bulgaricus (strain ATCC 11842 / DSM 20081 / BCRC 10696 / JCM 1002 / NBRC 13953 / NCIMB 11778 / NCTC 12712 / WDCM 00102 / Lb 14).